A 156-amino-acid polypeptide reads, in one-letter code: Small ribosomal subunit protein uS7 (156 aa).

This sequence belongs to the universal ribosomal protein uS7 family. As to quaternary structure, part of the 30S ribosomal subunit. Contacts proteins S9 and S11.

One of the primary rRNA binding proteins, it binds directly to 16S rRNA where it nucleates assembly of the head domain of the 30S subunit. Is located at the subunit interface close to the decoding center, probably blocks exit of the E-site tRNA. This chain is Small ribosomal subunit protein uS7, found in Rhodopseudomonas palustris (strain BisA53).